A 476-amino-acid polypeptide reads, in one-letter code: Bifunctional protein HldE (476 aa).

Residues 1-319 form a ribokinase region; the sequence is MKVSLPAFEK…EALALHHGES (319 aa). 195–198 lines the ATP pocket; it reads NMSE. Residue Asp-264 is part of the active site. Residues 345-476 are cytidylyltransferase; sequence MTNGCFDILH…AIIQNIMANQ (132 aa).

It in the N-terminal section; belongs to the carbohydrate kinase PfkB family. This sequence in the C-terminal section; belongs to the cytidylyltransferase family. In terms of assembly, homodimer.

The catalysed reaction is D-glycero-beta-D-manno-heptose 7-phosphate + ATP = D-glycero-beta-D-manno-heptose 1,7-bisphosphate + ADP + H(+). It catalyses the reaction D-glycero-beta-D-manno-heptose 1-phosphate + ATP + H(+) = ADP-D-glycero-beta-D-manno-heptose + diphosphate. It functions in the pathway nucleotide-sugar biosynthesis; ADP-L-glycero-beta-D-manno-heptose biosynthesis; ADP-L-glycero-beta-D-manno-heptose from D-glycero-beta-D-manno-heptose 7-phosphate: step 1/4. Its pathway is nucleotide-sugar biosynthesis; ADP-L-glycero-beta-D-manno-heptose biosynthesis; ADP-L-glycero-beta-D-manno-heptose from D-glycero-beta-D-manno-heptose 7-phosphate: step 3/4. Functionally, catalyzes the phosphorylation of D-glycero-D-manno-heptose 7-phosphate at the C-1 position to selectively form D-glycero-beta-D-manno-heptose-1,7-bisphosphate. In terms of biological role, catalyzes the ADP transfer from ATP to D-glycero-beta-D-manno-heptose 1-phosphate, yielding ADP-D-glycero-beta-D-manno-heptose. This chain is Bifunctional protein HldE, found in Shewanella baltica (strain OS195).